A 420-amino-acid polypeptide reads, in one-letter code: Glutamate dehydrogenase (420 aa).

Lys105 is a catalytic residue. 220-226 (GYGNAGY) is a binding site for NAD(+).

This sequence belongs to the Glu/Leu/Phe/Val dehydrogenases family. As to quaternary structure, homohexamer.

It localises to the cytoplasm. It carries out the reaction L-glutamate + NAD(+) + H2O = 2-oxoglutarate + NH4(+) + NADH + H(+). The catalysed reaction is L-glutamate + NADP(+) + H2O = 2-oxoglutarate + NH4(+) + NADPH + H(+). This Pyrococcus horikoshii (strain ATCC 700860 / DSM 12428 / JCM 9974 / NBRC 100139 / OT-3) protein is Glutamate dehydrogenase (gdhA).